A 231-amino-acid polypeptide reads, in one-letter code: 7-cyano-7-deazaguanine synthase (231 aa).

Residue 8 to 18 (FSGGQDSTTCL) participates in ATP binding. The Zn(2+) site is built by C188, C197, C200, and C203.

The protein belongs to the QueC family. The cofactor is Zn(2+).

It carries out the reaction 7-carboxy-7-deazaguanine + NH4(+) + ATP = 7-cyano-7-deazaguanine + ADP + phosphate + H2O + H(+). It functions in the pathway purine metabolism; 7-cyano-7-deazaguanine biosynthesis. Functionally, catalyzes the ATP-dependent conversion of 7-carboxy-7-deazaguanine (CDG) to 7-cyano-7-deazaguanine (preQ(0)). The polypeptide is 7-cyano-7-deazaguanine synthase (Shigella flexneri serotype 5b (strain 8401)).